A 770-amino-acid polypeptide reads, in one-letter code: Metabotropic glutamate receptor-like protein F (770 aa).

The signal sequence occupies residues Met1–Gly22. At Gln23–Lys370 the chain is on the extracellular side. 6 N-linked (GlcNAc...) asparagine glycosylation sites follow: Asn24, Asn185, Asn260, Asn286, Asn319, and Asn344. Residues Ile371–Val391 form a helical membrane-spanning segment. Over Ile392–Pro405 the chain is Cytoplasmic. A helical membrane pass occupies residues Ile406–Ala426. Topologically, residues Arg427–Ser442 are extracellular. A helical transmembrane segment spans residues Leu443–Phe463. The Cytoplasmic portion of the chain corresponds to Asp464–Ser483. Residues Gly484–Ala504 form a helical membrane-spanning segment. The Extracellular segment spans residues Glu505–Gly528. A helical membrane pass occupies residues Ser529 to Ile549. At Ser550 to Lys565 the chain is on the cytoplasmic side. Residues Pro566–Val586 form a helical membrane-spanning segment. The Extracellular segment spans residues Ser587 to Gln594. Residues Thr595–Gly615 traverse the membrane as a helical segment. Residues Thr616–Val770 are Cytoplasmic-facing. The segment at Ser639–Ile740 is disordered. 2 stretches are compositionally biased toward basic and acidic residues: residues Ser676 to Met693 and Asn730 to Ile740. Positions Arg715–Asn760 form a coiled coil.

In the N-terminal section; belongs to the BMP lipoprotein family. This sequence in the C-terminal section; belongs to the G-protein coupled receptor 3 family. GABA-B receptor subfamily.

Its subcellular location is the membrane. The protein is Metabotropic glutamate receptor-like protein F (grlF) of Dictyostelium discoideum (Social amoeba).